The chain runs to 412 residues: MSPSAISSEYSNCNGTPDYALQSSEVSNFNGYDHVTWWVGNAKQAASYYNTVFGFKTLAYRGLETGSRYFASYVVGNADVRFVFTSPIRSQKCLPEEEPISDADRKLLQECHEHLEKHGDAVKDVAFEVDNVDGVFHKAVAAGADVVQEPTTLTDKMHGSVRTAVIRTYGDTTHTLISRADYNGPFLPGFRTAAPSSATVQLPSVPLARIDHCVGNQDWNEMVSACAFYEQCLSFHRFWSVDDSQICTEFSALNSIVMASENNLVKMPINEPAPGKKKSQIEEYVVFNSGAGVQHIALLTPDIISTVSAMRARGVEFINVPSTYYDTIRQRLKTEKRGWELKEDLDTIQKLNILIDYDEGGYLLQLFTKPLMDRPTVFIEIIQRNNFEGFGAGNFKSLFEAIEREQAERGNL.

VOC domains follow at residues 31-179 (GYDH…LISR) and 209-369 (RIDH…LFTK). Positions 212, 295, and 380 each coordinate Fe cation.

Belongs to the 4HPPD family. Requires Fe cation as cofactor.

It carries out the reaction 3-(4-hydroxyphenyl)pyruvate + O2 = homogentisate + CO2. Its pathway is amino-acid degradation; L-phenylalanine degradation; acetoacetate and fumarate from L-phenylalanine: step 3/6. The sequence is that of 4-hydroxyphenylpyruvate dioxygenase from Neurospora crassa (strain ATCC 24698 / 74-OR23-1A / CBS 708.71 / DSM 1257 / FGSC 987).